The chain runs to 347 residues: Phospho-N-acetylmuramoyl-pentapeptide-transferase (347 aa).

10 consecutive transmembrane segments (helical) span residues 10-30 (SLVF…IFLG), 67-87 (AGGI…LPLG), 91-111 (TWLF…DDIV), 127-147 (FVLQ…IYKG), 164-184 (LGHS…AIVG), 195-215 (LDGL…VVAV), 220-240 (IPLA…SLAF), 250-270 (VFMG…CAVM), 275-295 (LLLI…ILQI), and 325-345 (VVKR…IAAL).

This sequence belongs to the glycosyltransferase 4 family. MraY subfamily. Mg(2+) serves as cofactor.

It localises to the cell inner membrane. It carries out the reaction UDP-N-acetyl-alpha-D-muramoyl-L-alanyl-gamma-D-glutamyl-meso-2,6-diaminopimeloyl-D-alanyl-D-alanine + di-trans,octa-cis-undecaprenyl phosphate = di-trans,octa-cis-undecaprenyl diphospho-N-acetyl-alpha-D-muramoyl-L-alanyl-D-glutamyl-meso-2,6-diaminopimeloyl-D-alanyl-D-alanine + UMP. Its pathway is cell wall biogenesis; peptidoglycan biosynthesis. In terms of biological role, catalyzes the initial step of the lipid cycle reactions in the biosynthesis of the cell wall peptidoglycan: transfers peptidoglycan precursor phospho-MurNAc-pentapeptide from UDP-MurNAc-pentapeptide onto the lipid carrier undecaprenyl phosphate, yielding undecaprenyl-pyrophosphoryl-MurNAc-pentapeptide, known as lipid I. In Chlamydia abortus (strain DSM 27085 / S26/3) (Chlamydophila abortus), this protein is Phospho-N-acetylmuramoyl-pentapeptide-transferase.